We begin with the raw amino-acid sequence, 212 residues long: MNDAALAPDVSAALERGLQAQSLDTAFAAPLLRYLALLVRWNKTYNLTAVRDPRAMVTRHLLDSLAMQPYIASGMLADLGTGPGLPGIPLAITRPQLQVTLVESNGKKVRFMREALRHLELRNARVAESRAEALDEPTAYDHLTARALDKLAGIIAVGGHLLRPGGSLLAMKGIYPHEEIAALPEGWTMSEVHQLQVPGLDGERHLVVVRKA.

Residues Gly80, Leu85, 131–132 (AE), and Arg146 each bind S-adenosyl-L-methionine.

Belongs to the methyltransferase superfamily. RNA methyltransferase RsmG family.

The protein localises to the cytoplasm. It carries out the reaction guanosine(527) in 16S rRNA + S-adenosyl-L-methionine = N(7)-methylguanosine(527) in 16S rRNA + S-adenosyl-L-homocysteine. In terms of biological role, specifically methylates the N7 position of guanine in position 527 of 16S rRNA. The sequence is that of Ribosomal RNA small subunit methyltransferase G from Xanthomonas oryzae pv. oryzae (strain MAFF 311018).